Here is a 475-residue protein sequence, read N- to C-terminus: Cysteine--tRNA ligase (475 aa).

Residue Cys-28 coordinates Zn(2+). The 'HIGH' region motif lies at 30-40 (PTVYDETHIGH). Positions 208, 233, and 237 each coordinate Zn(2+). The 'KMSKS' region motif lies at 265–269 (KMSKS). Position 268 (Lys-268) interacts with ATP.

Belongs to the class-I aminoacyl-tRNA synthetase family. The cofactor is Zn(2+).

It is found in the cytoplasm. The enzyme catalyses tRNA(Cys) + L-cysteine + ATP = L-cysteinyl-tRNA(Cys) + AMP + diphosphate. This chain is Cysteine--tRNA ligase, found in Methanococcus vannielii (strain ATCC 35089 / DSM 1224 / JCM 13029 / OCM 148 / SB).